Reading from the N-terminus, the 152-residue chain is MRLNELSPPPGSRRARKRVGRGEGSGYGKTSGRGQKGAKARSGTKAYTTYEGGQMPLQRRLPRLKGEARGRHTPAHPKVYDPVNVGELAAVEGDTIGLDELRAAGLIRKKADTLVKILGDGEIDRPVTVRAHAFSRAAREKIEAAGGRAEVL.

The tract at residues 1–79 (MRLNELSPPP…GRHTPAHPKV (79 aa)) is disordered. Positions 22–35 (GEGSGYGKTSGRGQ) are enriched in gly residues.

Belongs to the universal ribosomal protein uL15 family. Part of the 50S ribosomal subunit.

Binds to the 23S rRNA. In Rubrobacter xylanophilus (strain DSM 9941 / JCM 11954 / NBRC 16129 / PRD-1), this protein is Large ribosomal subunit protein uL15.